We begin with the raw amino-acid sequence, 248 residues long: MAGHSQFKNIMHRKGRQDAVRSKLFSKLAREITVAAKMGLPDPNMNARLRAAILAARAENMPKDNIERAIKKASGADMENYDEIRYEGYGPGGVAVIVEALTDNRNRTASEVRSYFTKSGGNLAETGAVSFMFDRLGAIEFDAAKVNADDLLEAAIEAGADDVNSSEETHEVVCAVESLAEVQKALEAKFGEPRKAGLVWRPQNTIAVDDETGEKLMRLVETLEDNDDVQNVTANFELSEALMAKLSA.

Belongs to the TACO1 family.

Its subcellular location is the cytoplasm. This is Probable transcriptional regulatory protein AZC_0510 from Azorhizobium caulinodans (strain ATCC 43989 / DSM 5975 / JCM 20966 / LMG 6465 / NBRC 14845 / NCIMB 13405 / ORS 571).